A 206-amino-acid chain; its full sequence is ATP-dependent Clp protease proteolytic subunit 1 (206 aa).

Ser103 serves as the catalytic Nucleophile. The active site involves His128.

Belongs to the peptidase S14 family. Fourteen ClpP subunits assemble into 2 heptameric rings which stack back to back to give a disk-like structure with a central cavity, resembling the structure of eukaryotic proteasomes.

It localises to the cytoplasm. It carries out the reaction Hydrolysis of proteins to small peptides in the presence of ATP and magnesium. alpha-casein is the usual test substrate. In the absence of ATP, only oligopeptides shorter than five residues are hydrolyzed (such as succinyl-Leu-Tyr-|-NHMec, and Leu-Tyr-Leu-|-Tyr-Trp, in which cleavage of the -Tyr-|-Leu- and -Tyr-|-Trp bonds also occurs).. Cleaves peptides in various proteins in a process that requires ATP hydrolysis. Has a chymotrypsin-like activity. Plays a major role in the degradation of misfolded proteins. The polypeptide is ATP-dependent Clp protease proteolytic subunit 1 (Protochlamydia amoebophila (strain UWE25)).